A 214-amino-acid chain; its full sequence is S-crystallin 1 (214 aa).

Residues 2–79 (PSYTLHYFNH…YLAREFGFHG (78 aa)) enclose the GST N-terminal domain. Positions 81–214 (NNMEMARVDF…YLQRRCRTDF (134 aa)) constitute a GST C-terminal domain.

Belongs to the GST superfamily. Lens.

S-crystallins are structural components of squids and octopi eye lens. Contains relatively little GST activity (1/1000 of that of mammalian GST enzyme). The protein is S-crystallin 1 (OCTS1) of Octopus vulgaris (Common octopus).